The sequence spans 192 residues: Ion-translocating oxidoreductase complex subunit A (192 aa).

6 helical membrane-spanning segments follow: residues 5 to 25 (LLLLISTVLVNNFVLVKFLGL), 39 to 59 (IGMSMATTFVLTLASILSYLV), 65 to 85 (LPFDLGYLRTMSFILVIAVVV), 102 to 122 (ALGIYLPLITTNCAVLGVALL), 134 to 154 (AIYGFGAAVGFSLVLILFSAM), and 171 to 191 (AIAMITAGLMSLAFMGFTGLV).

This sequence belongs to the NqrDE/RnfAE family. In terms of assembly, the complex is composed of six subunits: RnfA, RnfB, RnfC, RnfD, RnfE and RnfG.

The protein resides in the cell inner membrane. Functionally, part of a membrane-bound complex that couples electron transfer with translocation of ions across the membrane. This chain is Ion-translocating oxidoreductase complex subunit A, found in Shewanella oneidensis (strain ATCC 700550 / JCM 31522 / CIP 106686 / LMG 19005 / NCIMB 14063 / MR-1).